A 533-amino-acid chain; its full sequence is Calcium/calmodulin-dependent protein kinase type II subunit delta (533 aa).

An N-acetylalanine modification is found at Ala-2. Residues 14 to 272 form the Protein kinase domain; it reads YQLFEELGKG…ASEALKHPWI (259 aa). ATP is bound by residues 20–28 and Lys-43; that span reads LGKGAFSVV. The active-site Proton acceptor is the Asp-136. The segment at 283–292 is autoinhibitory domain; that stretch reads HRQETVDCLK. Thr-287 carries the phosphothreonine; by autocatalysis modification. Residues 291–301 form a calmodulin-binding region; the sequence is LKKFNARRKLK. A phosphothreonine; by autocatalysis mark is found at Thr-306 and Thr-307. Position 315 is a phosphoserine (Ser-315). Lys-318 is modified (N6-acetyllysine). A phosphoserine mark is found at Ser-319 and Ser-364. The segment at 337 to 375 is disordered; the sequence is TSPKENIPTPALEPQTTVIHNPDGNKESTESSNTTIEDE. Thr-365 bears the Phosphothreonine mark. The residue at position 367 (Ser-367) is a Phosphoserine. Residues Thr-370 and Thr-371 each carry the phosphothreonine modification. Ser-438, Ser-524, and Ser-528 each carry phosphoserine.

It belongs to the protein kinase superfamily. CAMK Ser/Thr protein kinase family. CaMK subfamily. As to quaternary structure, CAMK2 is composed of 4 different chains: alpha (CAMK2A), beta (CAMK2B), gamma (CAMK2G), and delta (CAMK2D). The different isoforms assemble into homo- or heteromultimeric holoenzymes composed of 12 subunits with two hexameric rings stacked one on top of the other. Interacts with RRAD and CACNB2. In terms of processing, autophosphorylation of Thr-287 following activation by Ca(2+)/calmodulin. Phosphorylation of Thr-287 locks the kinase into an activated state. As to expression, expressed in liver.

The protein localises to the cell membrane. It is found in the sarcolemma. It localises to the sarcoplasmic reticulum membrane. The enzyme catalyses L-seryl-[protein] + ATP = O-phospho-L-seryl-[protein] + ADP + H(+). It catalyses the reaction L-threonyl-[protein] + ATP = O-phospho-L-threonyl-[protein] + ADP + H(+). With respect to regulation, activated by Ca(2+)/calmodulin. Binding of calmodulin results in conformational change that relieves intrasteric autoinhibition and allows autophosphorylation of Thr-287 which turns the kinase in a constitutively active form and confers to the kinase a Ca(2+)-independent activity. Its function is as follows. Calcium/calmodulin-dependent protein kinase involved in the regulation of Ca(2+) homeostatis and excitation-contraction coupling (ECC) in heart by targeting ion channels, transporters and accessory proteins involved in Ca(2+) influx into the myocyte, Ca(2+) release from the sarcoplasmic reticulum (SR), SR Ca(2+) uptake and Na(+) and K(+) channel transport. Targets also transcription factors and signaling molecules to regulate heart function. In its activated form, is involved in the pathogenesis of dilated cardiomyopathy and heart failure. Contributes to cardiac decompensation and heart failure by regulating SR Ca(2+) release via direct phosphorylation of RYR2 Ca(2+) channel on 'Ser-2808'. In the nucleus, phosphorylates the MEF2 repressor HDAC4, promoting its nuclear export and binding to 14-3-3 protein, and expression of MEF2 and genes involved in the hypertrophic program. Is essential for left ventricular remodeling responses to myocardial infarction. In pathological myocardial remodeling acts downstream of the beta adrenergic receptor signaling cascade to regulate key proteins involved in ECC. Regulates Ca(2+) influx to myocytes by binding and phosphorylating the L-type Ca(2+) channel subunit beta-2 CACNB2. In addition to Ca(2+) channels, can target and regulate the cardiac sarcolemmal Na(+) channel Nav1.5/SCN5A and the K+ channel Kv4.3/KCND3, which contribute to arrhythmogenesis in heart failure. Phosphorylates phospholamban (PLN/PLB), an endogenous inhibitor of SERCA2A/ATP2A2, contributing to the enhancement of SR Ca(2+) uptake that may be important in frequency-dependent acceleration of relaxation (FDAR) and maintenance of contractile function during acidosis. May participate in the modulation of skeletal muscle function in response to exercise, by regulating SR Ca(2+) transport through phosphorylation of PLN/PLB and triadin, a ryanodine receptor-coupling factor. In response to interferon-gamma (IFN-gamma) stimulation, catalyzes phosphorylation of STAT1, stimulating the JAK-STAT signaling pathway. The sequence is that of Calcium/calmodulin-dependent protein kinase type II subunit delta (CAMK2D) from Oryctolagus cuniculus (Rabbit).